We begin with the raw amino-acid sequence, 549 residues long: MSDSPRLTRRPEWTELEDHRAGPLLHPALRELFAADPERAERYVVRAGDLRLDYSKHLITDETLALLQELATATDVFGLRDAMFRGEKINVTENRAVLHTALRAPRDAVIEVDGENVVPAVHAVLDRMADFADRVRSGEWTGHTGSRIRTVVNIGIGGSDLGPAMAYEALRAFTDRSLTVRFVSNVDGADLHEAVRDLDPAETLFVIASKTFTTIETITNATSARSWLLAGLDGDEKAVAKHFVALSTNAGKVSDFGIDTANMFEFWDWVGGRYSFDSAIGLSLMIAIGPERFRELLDGFRIVDEHFRTAPAEANAPLLLGLLGVWYGSFFGAQSHAVLPYSHYLSKFTAYLQQLDMESNGKSVDRDGHPVEWQTGPVVWGTPGTNGQHAYYQLLHQGTKVIPADLIGFINPVDGLSDELAAQHDLLMANLFAQGQALAFGKTGDEVRAEGVPEEQVPHRTFRGNHPTTTILAAELTPSVLGQLIALYEHKVFVQGAIWNIDSFDQWGVELGKVLAKRVEPALTEGADVPGLDPSTAALVAAYRTHRKK.

Catalysis depends on glutamate 358, which acts as the Proton donor. Catalysis depends on residues histidine 389 and lysine 513.

Belongs to the GPI family.

It localises to the cytoplasm. It catalyses the reaction alpha-D-glucose 6-phosphate = beta-D-fructose 6-phosphate. Its pathway is carbohydrate biosynthesis; gluconeogenesis. It participates in carbohydrate degradation; glycolysis; D-glyceraldehyde 3-phosphate and glycerone phosphate from D-glucose: step 2/4. In terms of biological role, catalyzes the reversible isomerization of glucose-6-phosphate to fructose-6-phosphate. The polypeptide is Glucose-6-phosphate isomerase 1 (Streptomyces avermitilis (strain ATCC 31267 / DSM 46492 / JCM 5070 / NBRC 14893 / NCIMB 12804 / NRRL 8165 / MA-4680)).